A 1238-amino-acid polypeptide reads, in one-letter code: Cryptic loci regulator protein 1 (1238 aa).

Disordered stretches follow at residues 133–156 (TQQQVSNVSHGNFKPNSSVNTEPN), 196–237 (PFSN…PSSI), 277–303 (ASLYDRSPSKKDITSSRNTSSYNLGSM), 546–568 (QKSVSSETTLVKPSSTSSYIDTT), 696–735 (SDNTDCSLPKPSNSKLSSISSDGDASSNRMAVPDKSPFVH), and 784–824 (TLKE…QSRS). A compositionally biased stretch (polar residues) spans 214–223 (NVKNNSKKTA). Low complexity predominate over residues 224-237 (SSVNSNHSSIPSSI). The segment covering 291 to 303 (SSRNTSSYNLGSM) has biased composition (polar residues). The span at 702–723 (SLPKPSNSKLSSISSDGDASSN) shows a compositional bias: low complexity. Residues 785 to 796 (LKEDASSTKQAK) are compositionally biased toward basic and acidic residues. The segment covering 810–819 (NDVSKNNSGE) has biased composition (polar residues). The C2H2-type zinc-finger motif lies at 1062 to 1087 (LNCEVSNCKKCFSNYEDMFKHLQHSH).

Interacts with clr3.

It localises to the nucleus. Its subcellular location is the chromosome. It is found in the centromere. The protein localises to the telomere. In terms of biological role, regulates silencing of the mat2 and mat3 loci. Organizes the chromatin structure of the mating-type region where it also participates in establishing the 'cold spot' for recombination. Required for proper positioning of nucleosomes at heterochromatic loci and for transcriptional gene silencing (TGS) function of the Snf2/Hdac-containing repressor complex (SHREC). This Schizosaccharomyces pombe (strain 972 / ATCC 24843) (Fission yeast) protein is Cryptic loci regulator protein 1 (clr1).